The chain runs to 216 residues: Adenylate kinase (216 aa).

10 to 15 (GAGKGT) is an ATP binding site. The interval 30-59 (STGDIFRANIKEKTPLGIEAKRYIDNGQLV) is NMP. Residues T31, R36, 57–59 (QLV), 85–88 (GFPR), and Q92 contribute to the AMP site. Residues 126–163 (GRRVCTSCGASYHIRFNPPKIEGKCDICDNELIQRKDD) form an LID region. R127 lines the ATP pocket. The Zn(2+) site is built by C130 and C133. 136 to 137 (SY) is an ATP binding site. Zn(2+) is bound by residues C150 and C153. Residues R160 and R171 each contribute to the AMP site. Residue E199 coordinates ATP.

It belongs to the adenylate kinase family. Monomer.

The protein resides in the cytoplasm. It carries out the reaction AMP + ATP = 2 ADP. It participates in purine metabolism; AMP biosynthesis via salvage pathway; AMP from ADP: step 1/1. Catalyzes the reversible transfer of the terminal phosphate group between ATP and AMP. Plays an important role in cellular energy homeostasis and in adenine nucleotide metabolism. The sequence is that of Adenylate kinase from Clostridium botulinum (strain ATCC 19397 / Type A).